A 693-amino-acid chain; its full sequence is Polyribonucleotide nucleotidyltransferase (693 aa).

Mg(2+)-binding residues include Asp486 and Asp492. One can recognise a KH domain in the interval 553 to 612; the sequence is PRFSSMRIDTEKIKDVIGKGGATIRSITEQTGTTIEIEDDGSVKIAATDKAAAANARRLI. One can recognise an S1 motif domain in the interval 622-690; that stretch reads GRIYDAKVTK…RQGRVRLSIK (69 aa).

It belongs to the polyribonucleotide nucleotidyltransferase family. In terms of assembly, component of the RNA degradosome, which is a multiprotein complex involved in RNA processing and mRNA degradation. Mg(2+) is required as a cofactor.

The protein localises to the cytoplasm. It carries out the reaction RNA(n+1) + phosphate = RNA(n) + a ribonucleoside 5'-diphosphate. Involved in mRNA degradation. Catalyzes the phosphorolysis of single-stranded polyribonucleotides processively in the 3'- to 5'-direction. This Dichelobacter nodosus (strain VCS1703A) protein is Polyribonucleotide nucleotidyltransferase.